A 416-amino-acid chain; its full sequence is Alpha-1-antiproteinase (416 aa).

The N-terminal stretch at 1 to 24 (MALSITRGLLLLAALCCLAPISLA) is a signal peptide. N-linked (GlcNAc...) asparagine glycans are attached at residues Asn68, Asn105, Asn143, and Asn269. Residues 371–390 (GSTFLEAIPMSLPPDVEFNR) form an RCL region. Position 381 is a phosphoserine (Ser381).

It belongs to the serpin family. As to quaternary structure, interacts with CELA2A. Interacts with ERGIC3 and LMAN1/ERGIC53. Interacts with PRSS1/Trypsin. In terms of tissue distribution, plasma.

The protein resides in the secreted. Functionally, inhibitor of serine proteases. Its primary target is elastase, but it also has a moderate affinity for plasmin and thrombin. Inhibits trypsin, chymotrypsin and plasminogen activator. The sequence is that of Alpha-1-antiproteinase (SERPINA1) from Bos taurus (Bovine).